The chain runs to 223 residues: Glutathione S-transferase A1 (223 aa).

Methionine 1 carries the N-acetylmethionine modification. The residue at position 2 (alanine 2) is an N-acetylalanine; in Glutathione S-transferase A1, N-terminally processed. Residues 3 to 83 enclose the GST N-terminal domain; it reads GKPVLHYFNA…YIATKYDLYG (81 aa). An N6-succinyllysine modification is found at lysine 4. Glutathione-binding positions include tyrosine 9, lysine 45, 54 to 55, and 67 to 68; these read QV and QT. The GST C-terminal domain occupies 85–208; it reads DMKERALIDM…QPGSQRKPPM (124 aa).

It belongs to the GST superfamily. Alpha family. Homodimer. Expressed in the liver, skin and kidney.

The enzyme catalyses RX + glutathione = an S-substituted glutathione + a halide anion + H(+). The catalysed reaction is prostaglandin A2 + glutathione = prostaglandin A2-S-(R)-glutathione. It carries out the reaction prostaglandin J2 + glutathione = prostaglandin J2-S-(R)-glutathione. It catalyses the reaction (13S)-hydroperoxy-(9Z,11E)-octadecadienoate + 2 glutathione = (13S)-hydroxy-(9Z,11E)-octadecadienoate + glutathione disulfide + H2O. The enzyme catalyses androst-5-ene-3,17-dione = androst-4-ene-3,17-dione. Its function is as follows. Glutathione S-transferase that catalyzes the nucleophilic attack of the sulfur atom of glutathione on the electrophilic groups of a wide range of exogenous and endogenous compounds. Involved in the formation of glutathione conjugates of both prostaglandin A2 (PGA2) and prostaglandin J2 (PGJ2). It also catalyzes the isomerization of D5-androstene-3,17-dione (AD) into D4-androstene-3,17-dione and may therefore play an important role in hormone biosynthesis. Through its glutathione-dependent peroxidase activity toward the fatty acid hydroperoxide (13S)-hydroperoxy-(9Z,11E)-octadecadienoate/13-HPODE it is also involved in the metabolism of oxidized linoleic acid. This Mus musculus (Mouse) protein is Glutathione S-transferase A1 (Gsta1).